The primary structure comprises 156 residues: 6,7-dimethyl-8-ribityllumazine synthase (156 aa).

Residues phenylalanine 23, alanine 57 to glutamate 59, and alanine 81 to isoleucine 83 contribute to the 5-amino-6-(D-ribitylamino)uracil site. Glycine 86–threonine 87 contributes to the (2S)-2-hydroxy-3-oxobutyl phosphate binding site. Histidine 89 (proton donor) is an active-site residue. A 5-amino-6-(D-ribitylamino)uracil-binding site is contributed by phenylalanine 114. Arginine 128 contributes to the (2S)-2-hydroxy-3-oxobutyl phosphate binding site.

This sequence belongs to the DMRL synthase family.

It carries out the reaction (2S)-2-hydroxy-3-oxobutyl phosphate + 5-amino-6-(D-ribitylamino)uracil = 6,7-dimethyl-8-(1-D-ribityl)lumazine + phosphate + 2 H2O + H(+). The protein operates within cofactor biosynthesis; riboflavin biosynthesis; riboflavin from 2-hydroxy-3-oxobutyl phosphate and 5-amino-6-(D-ribitylamino)uracil: step 1/2. Functionally, catalyzes the formation of 6,7-dimethyl-8-ribityllumazine by condensation of 5-amino-6-(D-ribitylamino)uracil with 3,4-dihydroxy-2-butanone 4-phosphate. This is the penultimate step in the biosynthesis of riboflavin. This is 6,7-dimethyl-8-ribityllumazine synthase from Helicobacter pylori (strain Shi470).